The sequence spans 619 residues: CREB-regulated transcription coactivator 3 (619 aa).

Residues Ser-4 and Ser-62 each carry the phosphoserine modification. A disordered region spans residues Ser-129–His-148. Thr-160 is modified (phosphothreonine). Phosphoserine; by SIK2 is present on Ser-162. Lys-232 is covalently cross-linked (Glycyl lysine isopeptide (Lys-Gly) (interchain with G-Cter in SUMO2)). Residues Ser-273, Ser-329, Ser-332, Ser-370, Ser-391, Ser-396, and Ser-410 each carry the phosphoserine modification. The disordered stretch occupies residues Ser-375–Leu-478. The tract at residues Ser-380 to Ala-401 is required for interaction with PPP2CA and PPP2R1A. 2 stretches are compositionally biased toward polar residues: residues Phe-405–Leu-415 and Gln-422–Leu-431. Position 443 is a phosphoserine (Ser-443). Positions Ser-443 to Leu-454 are enriched in pro residues. Over residues Pro-455–Leu-478 the composition is skewed to low complexity.

Belongs to the TORC family. In terms of assembly, binding, as a tetramer, through its N-terminal region, with the bZIP domain of CREB1 enhances recruitment of TAF4 to the promoter. 'Arg-314' in the bZIP domain of CREB1 is essential for this interaction. Interacts (when phosphorylated at Ser-162 and Se-273) with 14-3-3 proteins. Interacts with YWHAE. Interacts (when phosphorylated at Ser-391) with phosphatase PP2A catalytic subunit PPP2CA and regulatory subunits PPP2R1A and PPP2R2A. Post-translationally, phosphorylation/dephosphorylation states of Ser-273 are required for regulating transduction of CREB activity. CRTCs/TORCs are inactive when phosphorylated, and active when dephosphorylated at this site. May be phosphorylated at Ser-391 by MAPK3/ERK1 and/or MAPK1/ERK2 or by some cyclin-dependent kinases such as CDK1,CDK2 or CDK5. Following adenylyl cyclase activation, dephosphorylated at Ser-162 and Ser-273 resulting in its dissociation from 14-3-3 proteins probably promoting CRTC3 translocation into the nucleus. As to expression, expressed in brown adipose tissues.

Its subcellular location is the nucleus. It localises to the cytoplasm. Transcriptional coactivator for CREB1 which activates transcription through both consensus and variant cAMP response element (CRE) sites. Acts as a coactivator, in the SIK/TORC signaling pathway, being active when dephosphorylated. Acts independently of CREB1 'Ser-133' phosphorylation. Enhances the interaction of CREB1 with TAF4. Regulates the expression of specific CREB-activated genes such as the steroidogenic gene, StAR. Potent coactivator of PPARGC1A and inducer of mitochondrial biogenesis in muscle cells. In Mus musculus (Mouse), this protein is CREB-regulated transcription coactivator 3 (Crtc3).